A 205-amino-acid polypeptide reads, in one-letter code: GTP cyclohydrolase-2 (205 aa).

49 to 53 (RIHSE) contacts GTP. The Zn(2+) site is built by Cys-54, Cys-65, and Cys-67. GTP is bound by residues Gln-70, 92–94 (EGR), and Thr-114. The Proton acceptor role is filled by Asp-126. Arg-128 serves as the catalytic Nucleophile. GTP-binding residues include Thr-149 and Lys-154.

Belongs to the GTP cyclohydrolase II family. The cofactor is Zn(2+).

The enzyme catalyses GTP + 4 H2O = 2,5-diamino-6-hydroxy-4-(5-phosphoribosylamino)-pyrimidine + formate + 2 phosphate + 3 H(+). The protein operates within cofactor biosynthesis; riboflavin biosynthesis; 5-amino-6-(D-ribitylamino)uracil from GTP: step 1/4. In terms of biological role, catalyzes the conversion of GTP to 2,5-diamino-6-ribosylamino-4(3H)-pyrimidinone 5'-phosphate (DARP), formate and pyrophosphate. The polypeptide is GTP cyclohydrolase-2 (Shewanella piezotolerans (strain WP3 / JCM 13877)).